Consider the following 137-residue polypeptide: MFSNWDIFLNYKNFTINQEIKNKLDLYYQILIQENQKYNLTRITELNEVFEKHFLDSLLFVEQFQIIDQKIADIGTGAGFPGIVLKIFFPNIKLTLIESNNKKANFLKYLVQKLELNNVEILNKRAEELNEYKEHLI.

Residues Gly75, Phe80, and Ala126 to Glu127 contribute to the S-adenosyl-L-methionine site.

This sequence belongs to the methyltransferase superfamily. RNA methyltransferase RsmG family.

It is found in the cytoplasm. In terms of biological role, specifically methylates the N7 position of a guanine in 16S rRNA. The polypeptide is Ribosomal RNA small subunit methyltransferase G (Mycoplasma mycoides subsp. mycoides SC (strain CCUG 32753 / NCTC 10114 / PG1)).